We begin with the raw amino-acid sequence, 77 residues long: RNA-binding protein Hfq (77 aa).

A Sm domain is found at 9-69 (DQFLNQLRKE…ISTFAPQKNV (61 aa)).

It belongs to the Hfq family. As to quaternary structure, homohexamer.

In terms of biological role, RNA chaperone that binds small regulatory RNA (sRNAs) and mRNAs to facilitate mRNA translational regulation in response to envelope stress, environmental stress and changes in metabolite concentrations. Also binds with high specificity to tRNAs. This Shouchella clausii (strain KSM-K16) (Alkalihalobacillus clausii) protein is RNA-binding protein Hfq.